We begin with the raw amino-acid sequence, 270 residues long: Decarboxylase NovR (270 aa).

Belongs to the aldolase class II family.

It functions in the pathway antibiotic biosynthesis; novobiocin biosynthesis. Functionally, may mediate the 2 consecutive oxidative decarboxylation steps in the biosynthesis of the prenylated hydroxybenzoic acid moiety of novobiocin, an aminocoumarin family antibiotic that targets bacterial DNA gyrases. The sequence is that of Decarboxylase NovR (novR) from Streptomyces niveus (Streptomyces spheroides).